The chain runs to 838 residues: Valine--tRNA ligase (838 aa).

Residues 46–56 carry the 'HIGH' region motif; sequence PNLTGTLHIGH. Residues 514-518 carry the 'KMSKS' region motif; it reads KMSKS. An ATP-binding site is contributed by lysine 517. Residues 768–838 adopt a coiled-coil conformation; sequence VDNAANNLAH…HLIAKLTKAE (71 aa).

The protein belongs to the class-I aminoacyl-tRNA synthetase family. ValS type 1 subfamily. In terms of assembly, monomer.

It localises to the cytoplasm. The enzyme catalyses tRNA(Val) + L-valine + ATP = L-valyl-tRNA(Val) + AMP + diphosphate. Catalyzes the attachment of valine to tRNA(Val). As ValRS can inadvertently accommodate and process structurally similar amino acids such as threonine, to avoid such errors, it has a 'posttransfer' editing activity that hydrolyzes mischarged Thr-tRNA(Val) in a tRNA-dependent manner. This chain is Valine--tRNA ligase, found in Mycoplasma pneumoniae (strain ATCC 29342 / M129 / Subtype 1) (Mycoplasmoides pneumoniae).